The following is a 505-amino-acid chain: 2,3-bisphosphoglycerate-independent phosphoglycerate mutase (505 aa).

Asp-15 and Ser-65 together coordinate Mn(2+). Ser-65 (phosphoserine intermediate) is an active-site residue. Residues His-126, 156 to 157 (RD), Arg-187, Arg-193, 260 to 263 (RPDR), and Lys-333 contribute to the substrate site. Residues Asp-398, His-402, Asp-439, His-440, and His-457 each contribute to the Mn(2+) site.

The protein belongs to the BPG-independent phosphoglycerate mutase family. As to quaternary structure, monomer. Requires Mn(2+) as cofactor.

It carries out the reaction (2R)-2-phosphoglycerate = (2R)-3-phosphoglycerate. It participates in carbohydrate degradation; glycolysis; pyruvate from D-glyceraldehyde 3-phosphate: step 3/5. Catalyzes the interconversion of 2-phosphoglycerate and 3-phosphoglycerate. The polypeptide is 2,3-bisphosphoglycerate-independent phosphoglycerate mutase (Mycoplasmopsis pulmonis (strain UAB CTIP) (Mycoplasma pulmonis)).